The sequence spans 336 residues: Ribosomal RNA large subunit methyltransferase F (336 aa).

The protein belongs to the methyltransferase superfamily. METTL16/RlmF family.

The protein localises to the cytoplasm. The catalysed reaction is adenosine(1618) in 23S rRNA + S-adenosyl-L-methionine = N(6)-methyladenosine(1618) in 23S rRNA + S-adenosyl-L-homocysteine + H(+). In terms of biological role, specifically methylates the adenine in position 1618 of 23S rRNA. This chain is Ribosomal RNA large subunit methyltransferase F, found in Yersinia pestis (strain Pestoides F).